Here is a 149-residue protein sequence, read N- to C-terminus: Ribosome-binding factor A (149 aa).

Belongs to the RbfA family. Monomer. Binds 30S ribosomal subunits, but not 50S ribosomal subunits or 70S ribosomes.

It is found in the cytoplasm. One of several proteins that assist in the late maturation steps of the functional core of the 30S ribosomal subunit. Associates with free 30S ribosomal subunits (but not with 30S subunits that are part of 70S ribosomes or polysomes). Required for efficient processing of 16S rRNA. May interact with the 5'-terminal helix region of 16S rRNA. This is Ribosome-binding factor A from Caulobacter vibrioides (strain ATCC 19089 / CIP 103742 / CB 15) (Caulobacter crescentus).